Reading from the N-terminus, the 420-residue chain is Protein MucB (420 aa).

One can recognise a UmuC domain in the interval 2–187 (FALIDVNGMY…LPVAEVWGVG (186 aa)).

It belongs to the DNA polymerase type-Y family.

In terms of biological role, involved in UV protection and mutation. The sequence is that of Protein MucB (mucB) from Escherichia coli.